Here is a 472-residue protein sequence, read N- to C-terminus: uncharacterized protein (472 aa).

14 consecutive transmembrane segments (helical) span residues 14–34 (VIVGILLAGAFVAILNQTLLI), 53–73 (WLTTSFMLTNGILIPITAFLI), 80–100 (ALLITAMSIFTAGTVVGAFAP), 113–133 (AAGAGIMMPLMQTVFLTIFPI), 142–162 (MVGLVISFAPAIGPTLSGWAV), 169–189 (SLFYIILPFAVIDLILASILM), 202–222 (ILSVILSTFGFGGLLYGFSSV), 227–247 (WSSSTVLISLLVGVIALLLFI), 263–283 (FTFGVFSLTTLLGTLVFALLI), 302–322 (FDTGLMLLPGAVVMGFMSPII), 333–353 (GLAIAGFCIIFLTSLPFMQLT), 359–379 (AWIVVLYTVRLLGTAMIMMPV), 405–427 (VGGSIGTALLVSVMSNQAAHAGT), and 437–457 (GMNAAFIVAAVIALVGFLLSF).

Belongs to the major facilitator superfamily. EmrB family.

The protein localises to the cell membrane. This is an uncharacterized protein from Bacillus subtilis (strain 168).